Reading from the N-terminus, the 550-residue chain is Glucose-6-phosphate isomerase 1 (550 aa).

E353 serves as the catalytic Proton donor. Residues H384 and K512 contribute to the active site.

Belongs to the GPI family.

It localises to the cytoplasm. The catalysed reaction is alpha-D-glucose 6-phosphate = beta-D-fructose 6-phosphate. The protein operates within carbohydrate biosynthesis; gluconeogenesis. It participates in carbohydrate degradation; glycolysis; D-glyceraldehyde 3-phosphate and glycerone phosphate from D-glucose: step 2/4. In terms of biological role, catalyzes the reversible isomerization of glucose-6-phosphate to fructose-6-phosphate. In Thiobacillus denitrificans (strain ATCC 25259 / T1), this protein is Glucose-6-phosphate isomerase 1.